Here is a 95-residue protein sequence, read N- to C-terminus: Co-chaperonin GroES (95 aa).

It belongs to the GroES chaperonin family. As to quaternary structure, heptamer of 7 subunits arranged in a ring. Interacts with the chaperonin GroEL.

It is found in the cytoplasm. Together with the chaperonin GroEL, plays an essential role in assisting protein folding. The GroEL-GroES system forms a nano-cage that allows encapsulation of the non-native substrate proteins and provides a physical environment optimized to promote and accelerate protein folding. GroES binds to the apical surface of the GroEL ring, thereby capping the opening of the GroEL channel. This is Co-chaperonin GroES from Deinococcus radiodurans (strain ATCC 13939 / DSM 20539 / JCM 16871 / CCUG 27074 / LMG 4051 / NBRC 15346 / NCIMB 9279 / VKM B-1422 / R1).